The following is a 1457-amino-acid chain: Ras guanine nucleotide exchange factor C (1457 aa).

The RCC1 1 repeat unit spans residues 1 to 55 (MSVFTFGHGSNGALGLGKITDDTCPTPQKVNYFTEIDKRVKKVACGSYHTVFVTD). Disordered regions lie at residues 75–196 (FYTS…PLLN), 209–264 (HYES…RINK), 282–313 (EQQQQPQQPQQNLKGIMNQPPLPTNDDLDEDP), and 376–404 (QQQLQQQQSMSSLQPSASSSSPSSSSLQT). 2 stretches are compositionally biased toward low complexity: residues 83 to 121 (TTTTTTTTSSTSATTTTTNGMVNEKNNNNKNNNGEKIVN) and 134 to 158 (SNTTNDSTSSSSTSTSSLSSSLPPT). Basic and acidic residues-rich tracts occupy residues 171 to 188 (IKLDKGIPHHRSTRELIQ) and 209 to 224 (HYESNEKSKDEMKDNE). Residues 225 to 237 (NENEEDEDDDDDD) are compositionally biased toward acidic residues. Positions 238–249 (STIRQNEDKESS) are enriched in basic and acidic residues. Composition is skewed to low complexity over residues 283–292 (QQQQPQQPQQ) and 376–403 (QQQLQQQQSMSSLQPSASSSSPSSSSLQ). 4 RCC1 repeats span residues 351 to 401 (GGNV…SSSS), 432 to 483 (WGEL…CYTE), 485 to 549 (GKMY…VLTQ), and 590 to 647 (SGEV…ALVE). The DH domain occupies 650-971 (PKTKLALQLV…QVLLERMNQN (322 aa)). The span at 703-715 (LPPSLKGLSGGLP) shows a compositional bias: low complexity. The interval 703-762 (LPPSLKGLSGGLPDNANNTIKNGKDKDNHHNGDSNGHHSNGHYHGNGNNGNNSITTSNSI) is disordered. Residues 724-738 (NGKDKDNHHNGDSNG) show a composition bias toward basic and acidic residues. Low complexity predominate over residues 739–762 (HHSNGHYHGNGNNGNNSITTSNSI). An N-terminal Ras-GEF domain is found at 989 to 1109 (GNPQIMGGSL…SVSQIKLQYF (121 aa)). The tract at residues 1127–1210 (LTQNEITTPP…NNNNNNNNLT (84 aa)) is disordered. Residues 1138–1211 (LQIQNNNQNN…NNNNNNNLTN (74 aa)) are a coiled coil. Residues 1142–1210 (NNNQNNNLEN…NNNNNNNNLT (69 aa)) are compositionally biased toward low complexity. Residues 1232 to 1454 (QPIEVAQTLT…DDKQAQKISS (223 aa)) enclose the Ras-GEF domain.

Promotes the exchange of Ras-bound GDP by GTP. The polypeptide is Ras guanine nucleotide exchange factor C (gefC) (Dictyostelium discoideum (Social amoeba)).